A 333-amino-acid chain; its full sequence is 1,5-anhydro-D-fructose reductase (333 aa).

NADP(+) is bound by residues 9-12 (ASTI), 33-34 (ST), R38, 71-76 (TTNELH), 93-94 (EK), N120, 162-163 (WR), and Y283.

In terms of assembly, monomer.

The catalysed reaction is 1,5-anhydro-D-mannitol + NADP(+) = 1,5-anhydro-D-fructose + NADPH + H(+). Its function is as follows. Catalyzes the NADPH-specific reduction of 1,5-anhydro-D-fructose to 1,5-anhydro-D-mannitol. Also shows some activity against structurally related compounds such as 3-keto-1,5-anhydro-D-fructose, D-glucosone and D-xylosone. The enzyme cannot use NADH as cosubstrate. This Ensifer adhaerens (Sinorhizobium morelense) protein is 1,5-anhydro-D-fructose reductase (afr).